Reading from the N-terminus, the 207-residue chain is Ras-related protein Rab-8B (207 aa).

Positions 17, 18, 19, 20, 21, 22, 23, 35, 39, and 40 each coordinate GTP. Thr22 is a Mg(2+) binding site. Short sequence motifs (switch) lie at residues 31–45 (DAFNTTFISTIGIDF) and 63–80 (DTAGQERFRTITTAYYRG). Mg(2+) is bound by residues Thr40 and Asp63. A GTP-binding site is contributed by Gly66. Residue Thr72 is modified to Phosphothreonine. Residues Asn121, Lys122, Asp124, Ala152, and Lys153 each coordinate GTP. Ser180 is modified (phosphoserine). Cys204 bears the Cysteine methyl ester mark. The S-geranylgeranyl cysteine moiety is linked to residue Cys204. The propeptide at 205–207 (LLL) is removed in mature form.

Belongs to the small GTPase superfamily. Rab family. As to quaternary structure, associated with actin, delta-catenin and alpha and beta tubulins. Interacts with OTOF. Interacts with PEX5R. Interacts with RAB3IP. Interacts with VIM. Interacts with CDH1. Interacts with MICALL2. Interacts with GDI1, GDI2, CHML and CHM; phosphorylation at Thr-72 disrupts these interactions. Interacts with MICAL1. It depends on Mg(2+) as a cofactor. Post-translationally, phosphorylation of Thr-72 in the switch II region by LRRK2 prevents the association of RAB regulatory proteins, including CHM, CHML and RAB GDP dissociation inhibitors GDI1 and GDI2.

The protein resides in the cell membrane. Its subcellular location is the cytoplasmic vesicle. It is found in the phagosome membrane. It localises to the endosome membrane. It catalyses the reaction GTP + H2O = GDP + phosphate + H(+). With respect to regulation, regulated by guanine nucleotide exchange factors (GEFs) including RAB3IP/RABIN8 which promotes the exchange of bound GDP for free GTP. Regulated by GTPase activating proteins (GAPs) which increase the GTP hydrolysis activity. Inhibited by GDP dissociation inhibitors (GDIs). In terms of biological role, the small GTPases Rab are key regulators of intracellular membrane trafficking, from the formation of transport vesicles to their fusion with membranes. Rabs cycle between an inactive GDP-bound form and an active GTP-bound form that is able to recruit to membranes different sets of downstream effectors directly responsible for vesicle formation, movement, tethering and fusion. RAB8B may be involved in polarized vesicular trafficking and neurotransmitter release. May participate in cell junction dynamics in Sertoli cells. May also participate in the export of a subset of neosynthesized proteins through a Rab8-Rab10-Rab11-dependent endososomal export route. This is Ras-related protein Rab-8B (RAB8B) from Pongo abelii (Sumatran orangutan).